The sequence spans 210 residues: Homeobox protein Rhox5 (210 aa).

Residues 1–119 (MEAEGSSRKV…GNPGGRQMPL (119 aa)) form a disordered region. Over residues 17-30 (GVKEDSEEQHDVKA) the composition is skewed to basic and acidic residues. Residues 47–79 (GQPGVGAVGTEGEGEELNGGKGHFGPGAPGPMG) show a composition bias toward gly residues. A DNA-binding region (homeobox; atypical) is located at residues 117–175 (MPLQGSRFAQHRLRELESILQRTNSFDVPREDLDRLMDACVSRVQNWFKIRRAAARRTR).

It localises to the nucleus. Functionally, transcription factor required for differentiation of embryonic stem cells (ESCs) into primordial germ cells. In Mus musculus (Mouse), this protein is Homeobox protein Rhox5 (Rhox5).